Here is an 836-residue protein sequence, read N- to C-terminus: Transcription factor vrtR2 (836 aa).

Residues 1–26 (MPSLSSKTSTMQRSCRPQMSACPNQQ) show a composition bias toward polar residues. Residues 1 to 29 (MPSLSSKTSTMQRSCRPQMSACPNQQQKD) form a disordered region. A DNA-binding region (zn(2)-C6 fungal-type) is located at residues 37 to 63 (CVLCRDRKLKCDKLDPCSNCTSSGVAC). Positions 72 to 114 (PRGRHARTVQTKASTPPDTRRRGSSNESTTAPAPDDGGLGTHI) are disordered. Residues 79-88 (TVQTKASTPP) are compositionally biased toward polar residues.

The protein localises to the nucleus. Its function is as follows. Probable transcription factor that regulates expression of the gene cluster that mediates the biosynthesis of viridicatumtoxin, a tetracycline-like fungal meroterpenoid with a unique, fused spirobicyclic ring system. This is Transcription factor vrtR2 from Penicillium aethiopicum.